Here is a 109-residue protein sequence, read N- to C-terminus: Protein reprimo (109 aa).

N-linked (GlcNAc...) asparagine glycans are attached at residues asparagine 7 and asparagine 18. Residues 56–76 (VVQIAVMCVLSLTVVFGIFFL) form a helical membrane-spanning segment. Serine 98 is modified (phosphoserine).

Belongs to the reprimo family.

It is found in the cytoplasm. It localises to the membrane. Its function is as follows. May be involved in the regulation of p53-dependent G2 arrest of the cell cycle. Seems to induce cell cycle arrest by inhibiting CDK1 activity and nuclear translocation of the CDC2 cyclin B1 complex. In Mus musculus (Mouse), this protein is Protein reprimo (Rprm).